The primary structure comprises 163 residues: Lectin-like protein EP153R (163 aa).

The Cytoplasmic portion of the chain corresponds to 1–26 (MFSNKKYIGLINKKEGLKKKIDDYSI). A helical transmembrane segment spans residues 27–47 (LIIGILIGTNILSLIINIIGE). Topologically, residues 48-163 (INKPICYQNN…YTDLLFICSK (116 aa)) are extracellular. Cysteines 63 and 74 form a disulfide. A lectin-like region spans residues 63 to 162 (CPKDWVGYNN…HYTDLLFICS (100 aa)). N-linked (GlcNAc...) asparagine; by host glycosylation is found at asparagine 84, asparagine 96, asparagine 97, asparagine 103, asparagine 109, asparagine 115, asparagine 129, and asparagine 135. Cysteine 92 and cysteine 161 form a disulfide bridge.

The protein belongs to the asfivirus lectin-like protein family. Homodimer.

The protein localises to the host endoplasmic reticulum membrane. In terms of biological role, down-regulates MHC-I expression by impairing the appropriate configuration or presentation into the plasma membrane of the latter. Participates in viral hemadsorption, which may help viral spread. Reduces the transactivating activity of host TP53, thus inhibiting apoptosis. Non-essential for virus growth in swine macrophage cell cultures. The chain is Lectin-like protein EP153R from African swine fever virus (isolate Warthog/Namibia/Wart80/1980) (ASFV).